A 149-amino-acid polypeptide reads, in one-letter code: uncharacterized protein (149 aa).

Disordered regions lie at residues 24–74 (TSQG…NDLE) and 129–149 (AIQDDAGIPNPEMPKSAPRAP). Residues 28–42 (EDVKPEPKPEVDEKV) are compositionally biased toward basic and acidic residues. Positions 102–131 (SELESLKEKVSSATSMEELREIMEEFRAIQ) form a coiled coil.

This is an uncharacterized protein from Archaeoglobus fulgidus (strain ATCC 49558 / DSM 4304 / JCM 9628 / NBRC 100126 / VC-16).